The primary structure comprises 638 residues: Probable beta-glucosidase C (638 aa).

Positions methionine 1 to alanine 18 are cleaved as a signal peptide. N-linked (GlcNAc...) asparagine glycosylation is found at asparagine 40, asparagine 94, asparagine 116, asparagine 223, and asparagine 274. Aspartate 341 is an active-site residue. N-linked (GlcNAc...) asparagine glycans are attached at residues asparagine 364, asparagine 480, asparagine 488, and asparagine 528.

The protein belongs to the glycosyl hydrolase 3 family.

The protein localises to the secreted. It carries out the reaction Hydrolysis of terminal, non-reducing beta-D-glucosyl residues with release of beta-D-glucose.. The protein operates within glycan metabolism; cellulose degradation. Its function is as follows. Beta-glucosidases are one of a number of cellulolytic enzymes involved in the degradation of cellulosic biomass. Catalyzes the last step releasing glucose from the inhibitory cellobiose. The chain is Probable beta-glucosidase C (bglC) from Aspergillus oryzae (strain ATCC 42149 / RIB 40) (Yellow koji mold).